Reading from the N-terminus, the 76-residue chain is Putative snRNP Sm-like protein (76 aa).

Residues 4 to 76 (RPLDVIHRSL…VLAISPVDIE (73 aa)) enclose the Sm domain.

This sequence belongs to the snRNP Sm proteins family.

The polypeptide is Putative snRNP Sm-like protein (Thermococcus gammatolerans (strain DSM 15229 / JCM 11827 / EJ3)).